Here is a 143-residue protein sequence, read N- to C-terminus: UPF0201 protein Tneu_0685 (143 aa).

The protein belongs to the UPF0201 family.

This chain is UPF0201 protein Tneu_0685, found in Pyrobaculum neutrophilum (strain DSM 2338 / JCM 9278 / NBRC 100436 / V24Sta) (Thermoproteus neutrophilus).